The primary structure comprises 693 residues: Zinc finger BED domain-containing protein 5 (693 aa).

The BED-type zinc finger occupies 108–164; the sequence is RKYDESYLSFGFTYFGNRDAPHAQCVLCKKILSNSSLAPSKLRRHLETKHAAYKDKD. Cys132, Cys135, His152, and His157 together coordinate Zn(2+).

This chain is Zinc finger BED domain-containing protein 5 (ZBED5), found in Homo sapiens (Human).